The primary structure comprises 314 residues: F-box protein AUF2 (314 aa).

Residues 1 to 49 (MDVFDGLPDPIIVDILNKVGDVKTLLRCSSLSKRFNSLVPQSESLTLRL) form the F-box domain.

In terms of assembly, part of a SCF (ASK-cullin-F-box) protein ligase complex.

It localises to the nucleus. Its pathway is protein modification; protein ubiquitination. Functionally, component of SCF(ASK-cullin-F-box) E3 ubiquitin ligase complexes, which may mediate the ubiquitination and subsequent proteasomal degradation of target proteins. This Arabidopsis thaliana (Mouse-ear cress) protein is F-box protein AUF2.